A 305-amino-acid polypeptide reads, in one-letter code: UDP-3-O-acyl-N-acetylglucosamine deacetylase (305 aa).

The Zn(2+) site is built by H79, H238, and D242. H265 serves as the catalytic Proton donor.

It belongs to the LpxC family. Requires Zn(2+) as cofactor.

The enzyme catalyses a UDP-3-O-[(3R)-3-hydroxyacyl]-N-acetyl-alpha-D-glucosamine + H2O = a UDP-3-O-[(3R)-3-hydroxyacyl]-alpha-D-glucosamine + acetate. It functions in the pathway glycolipid biosynthesis; lipid IV(A) biosynthesis; lipid IV(A) from (3R)-3-hydroxytetradecanoyl-[acyl-carrier-protein] and UDP-N-acetyl-alpha-D-glucosamine: step 2/6. Functionally, catalyzes the hydrolysis of UDP-3-O-myristoyl-N-acetylglucosamine to form UDP-3-O-myristoylglucosamine and acetate, the committed step in lipid A biosynthesis. This chain is UDP-3-O-acyl-N-acetylglucosamine deacetylase, found in Salmonella typhi.